The following is a 331-amino-acid chain: Aromatic 2-oxoacid reductase (331 aa).

NAD(+)-binding positions include Arg-154 to Ile-155, Asp-175, Ala-205 to Pro-206, Asn-211, Ala-232 to Arg-234, and Asp-258. Arg-234 is an active-site residue. Glu-263 is a catalytic residue. His-295 acts as the Proton donor in catalysis.

This sequence belongs to the D-isomer specific 2-hydroxyacid dehydrogenase family.

The enzyme catalyses (R)-3-phenyllactate + NAD(+) = 3-phenylpyruvate + NADH + H(+). It catalyses the reaction (2R)-2-hydroxy-3-(4-hydroxyphenyl)propanoate + NAD(+) = 3-(4-hydroxyphenyl)pyruvate + NADH + H(+). The catalysed reaction is 3-(indol-3-yl)lactate + NAD(+) = indole-3-pyruvate + NADH + H(+). It functions in the pathway amino-acid degradation. In terms of biological role, essential for the reductive metabolism of L-phenylalanine, L-tyrosine and L-tryptophan. Catalyzes the conversion of phenylpyruvic acid to phenyllactic acid, 4-hydroxy-phenylpyruvic acid to 4-hydroxy-phenyllactic acid, and indolepyruvic acid to indolelactic acid. This chain is Aromatic 2-oxoacid reductase, found in Clostridium sporogenes (strain ATCC 7955 / DSM 767 / NBRC 16411 / NCIMB 8053 / NCTC 8594 / PA 3679).